The following is a 132-amino-acid chain: D-ribose pyranase (132 aa).

The active-site Proton donor is the histidine 20. Substrate contacts are provided by residues aspartate 28, histidine 99, and 121–123 (YSN).

The protein belongs to the RbsD / FucU family. RbsD subfamily. As to quaternary structure, homodecamer.

It localises to the cytoplasm. It catalyses the reaction beta-D-ribopyranose = beta-D-ribofuranose. Its pathway is carbohydrate metabolism; D-ribose degradation; D-ribose 5-phosphate from beta-D-ribopyranose: step 1/2. Catalyzes the interconversion of beta-pyran and beta-furan forms of D-ribose. The sequence is that of D-ribose pyranase from Streptococcus agalactiae serotype Ia (strain ATCC 27591 / A909 / CDC SS700).